A 355-amino-acid chain; its full sequence is MKTYKIALIKGDGIGPEIIDEAVKVLDAVASCCDLEFSYEEALMGGCAYDITGDPLPQETINISLNSDAVLFGAIGGAKWDNLPREKRPESGLLRFRKELGVYANLRPANVFDELINASSLKAEVIKGVDLMVVRELIGGIYFGEPKGRDENRGWNTMVYTREEIVRIAHQAFKIAMSRSKRVCSIDKANVLDVSQLWREVVIEVAKEYPEVELTHMYVDNAAMQLIRDPRQFDVMLTGNIFGDILSDEASMLSGSIGLLPSASVGAKIGVYEPIHGSAPDIAGQGIANPIATILSASMMLRYALGEHGAADKIDAAVKRALKEGYRTKDLAQYDAKEVCSTSEMGSIIANYAAK.

Gly77–Glu90 contacts NAD(+). Arg97, Arg107, Arg135, and Asp220 together coordinate substrate. The Mg(2+) site is built by Asp220, Asp244, and Asp248. Gly277–Asn289 is an NAD(+) binding site.

Belongs to the isocitrate and isopropylmalate dehydrogenases family. LeuB type 1 subfamily. Homodimer. It depends on Mg(2+) as a cofactor. Mn(2+) serves as cofactor.

The protein localises to the cytoplasm. It catalyses the reaction (2R,3S)-3-isopropylmalate + NAD(+) = 4-methyl-2-oxopentanoate + CO2 + NADH. It participates in amino-acid biosynthesis; L-leucine biosynthesis; L-leucine from 3-methyl-2-oxobutanoate: step 3/4. In terms of biological role, catalyzes the oxidation of 3-carboxy-2-hydroxy-4-methylpentanoate (3-isopropylmalate) to 3-carboxy-4-methyl-2-oxopentanoate. The product decarboxylates to 4-methyl-2 oxopentanoate. The protein is 3-isopropylmalate dehydrogenase of Sulfurimonas denitrificans (strain ATCC 33889 / DSM 1251) (Thiomicrospira denitrificans (strain ATCC 33889 / DSM 1251)).